The chain runs to 195 residues: Imidazoleglycerol-phosphate dehydratase (195 aa).

The protein belongs to the imidazoleglycerol-phosphate dehydratase family.

It localises to the cytoplasm. The catalysed reaction is D-erythro-1-(imidazol-4-yl)glycerol 3-phosphate = 3-(imidazol-4-yl)-2-oxopropyl phosphate + H2O. It participates in amino-acid biosynthesis; L-histidine biosynthesis; L-histidine from 5-phospho-alpha-D-ribose 1-diphosphate: step 6/9. The chain is Imidazoleglycerol-phosphate dehydratase from Thiobacillus denitrificans (strain ATCC 25259 / T1).